A 27-amino-acid polypeptide reads, in one-letter code: Ferric reductase B (27 aa).

Homodimer. It depends on FAD as a cofactor.

It carries out the reaction 2 a Fe(II)-siderophore + NAD(+) + H(+) = 2 a Fe(III)-siderophore + NADH. Its function is as follows. Reductase activity that acts on Fe(3+)-chelates and uses both NADH and NADPH as electron donors. May play a role in iron uptake. This Paracoccus denitrificans protein is Ferric reductase B (ferB).